Consider the following 400-residue polypeptide: Canavanine gamma-lyase (400 aa).

K213 carries the N6-(pyridoxal phosphate)lysine modification.

This sequence belongs to the trans-sulfuration enzymes family. Pyridoxal 5'-phosphate is required as a cofactor.

The enzyme catalyses L-canavanine + H2O = N-hydroxyguanidine + L-homoserine. In terms of biological role, lyase involved in the degradation of canavanine, the delta-oxa-analog of arginine, allowing growth on canavanine as sole nitrogen and carbon source. Catalyzes the elimination of hydroxyguanidine from canavanine with a subsequent water addition to yield homoserine. Is highly specific for canavanine and cannot use methionine, cystathionine or arginine. The chain is Canavanine gamma-lyase from Pseudomonas canavaninivorans.